The sequence spans 489 residues: Leukocyte immunoglobulin-like receptor subfamily A member 1 (489 aa).

A signal peptide spans methionine 1–glycine 16. The Extracellular segment spans residues proline 17 to asparagine 461. 4 Ig-like C2-type domains span residues proline 27–leucine 116, threonine 119–lysine 224, proline 226–aspartate 315, and proline 326–leucine 415. The cysteines at positions 49 and 98 are disulfide-linked. Asparagine 140 is a glycosylation site (N-linked (GlcNAc...) asparagine). 3 cysteine pairs are disulfide-bonded: cysteine 145–cysteine 197, cysteine 157–cysteine 167, and cysteine 246–cysteine 297. N-linked (GlcNAc...) asparagine glycans are attached at residues asparagine 281, asparagine 302, and asparagine 341. A disulfide bond links cysteine 346 and cysteine 397. The segment at threonine 425–histidine 453 is disordered. N-linked (GlcNAc...) asparagine glycans are attached at residues asparagine 431 and asparagine 448. Positions asparagine 441–histidine 453 are enriched in polar residues. The helical transmembrane segment at leucine 462–alanine 482 threads the bilayer. Over glutamine 483–leucine 489 the chain is Cytoplasmic.

In terms of tissue distribution, detected in monocytes and B-cells.

It localises to the membrane. May act as receptor for class I MHC antigens. This is Leukocyte immunoglobulin-like receptor subfamily A member 1 (LILRA1) from Homo sapiens (Human).